The following is a 483-amino-acid chain: 5-hydroxytryptamine receptor 3A (483 aa).

The signal sequence occupies residues 1-23; the sequence is MPLCIPQVLLALFLSVLIAQGEG. Over 24 to 246 the chain is Extracellular; that stretch reads SRRRATQAHS…MKFYVVIRRR (223 aa). Asparagine 109, asparagine 175, and asparagine 191 each carry an N-linked (GlcNAc...) asparagine glycan. Cysteines 162 and 176 form a disulfide. A helical transmembrane segment spans residues 247-273; sequence PLFYAVSLLLPSIFLMVVDIVGFCLPP. Topologically, residues 274–278 are cytoplasmic; it reads DSGER. A helical transmembrane segment spans residues 279 to 297; the sequence is VSFKITLLLGYSVFLIIVS. Residues 298 to 307 are Extracellular-facing; that stretch reads DTLPATAIGT. Residues 308–326 traverse the membrane as a helical segment; it reads PLIGVYFVVCMALLVISLA. At 327–460 the chain is on the cytoplasmic side; the sequence is ETIFIVQLVH…GYVLDRLLFR (134 aa). The tract at residues 393–414 is disordered; the sequence is VGSPQDLEKTSRSRDSPLPPPR. Over residues 398–407 the composition is skewed to basic and acidic residues; that stretch reads DLEKTSRSRD. An HA-stretch; determines single-channel conductance in 5-HT3 receptors region spans residues 419 to 455; it reads AVRGLLQELSSIRHSLEKRDEMREVARDWLRVGYVLD. Residues 461–480 traverse the membrane as a helical segment; it reads IYLLAVLAYSITLVTLWSIW. The Extracellular segment spans residues 481–483; the sequence is HYS.

Belongs to the ligand-gated ion channel (TC 1.A.9) family. 5-hydroxytryptamine receptor (TC 1.A.9.2) subfamily. HTR3A sub-subfamily. Forms homopentameric as well as heteropentameric serotonin-activated cation-selective channel complexes with HTR3B or HTR3C or HTR3D or HTR3E. The homomeric complex is functional but exhibits low conductance with modified voltage dependence, and decreased agonist and antagonist affinity. Heteropentameric complexes display properties which resemble that of neuronal serotonin-activated channels in vivo. Interacts with RIC3. Expressed in central and peripheral neurons.

The protein resides in the postsynaptic cell membrane. The protein localises to the cell membrane. It catalyses the reaction Na(+)(in) = Na(+)(out). The catalysed reaction is K(+)(in) = K(+)(out). It carries out the reaction Ca(2+)(in) = Ca(2+)(out). The enzyme catalyses Mg(2+)(in) = Mg(2+)(out). In terms of biological role, forms serotonin (5-hydroxytryptamine/5-HT3)-activated cation-selective channel complexes, which when activated cause fast, depolarizing responses in neurons. The polypeptide is 5-hydroxytryptamine receptor 3A (Rattus norvegicus (Rat)).